We begin with the raw amino-acid sequence, 156 residues long: Guanine deaminase (156 aa).

Residues 1-132 (MNHETFLKRA…KPAEERTIPF (132 aa)) form the CMP/dCMP-type deaminase domain. Residue His53 coordinates Zn(2+). Glu55 acts as the Proton donor in catalysis. Residues Cys83 and Cys86 each coordinate Zn(2+).

It belongs to the cytidine and deoxycytidylate deaminase family. Zn(2+) is required as a cofactor.

It carries out the reaction guanine + H2O + H(+) = xanthine + NH4(+). Its pathway is purine metabolism; guanine degradation; xanthine from guanine: step 1/1. Its function is as follows. Catalyzes the hydrolytic deamination of guanine, producing xanthine and ammonia. The protein is Guanine deaminase (guaD) of Bacillus subtilis (strain 168).